We begin with the raw amino-acid sequence, 239 residues long: 1-(5-phosphoribosyl)-5-[(5-phosphoribosylamino)methylideneamino] imidazole-4-carboxamide isomerase (239 aa).

Catalysis depends on Asp9, which acts as the Proton acceptor. The Proton donor role is filled by Asp131.

The protein belongs to the HisA/HisF family.

It localises to the cytoplasm. The enzyme catalyses 1-(5-phospho-beta-D-ribosyl)-5-[(5-phospho-beta-D-ribosylamino)methylideneamino]imidazole-4-carboxamide = 5-[(5-phospho-1-deoxy-D-ribulos-1-ylimino)methylamino]-1-(5-phospho-beta-D-ribosyl)imidazole-4-carboxamide. The protein operates within amino-acid biosynthesis; L-histidine biosynthesis; L-histidine from 5-phospho-alpha-D-ribose 1-diphosphate: step 4/9. This Bacteroides fragilis (strain ATCC 25285 / DSM 2151 / CCUG 4856 / JCM 11019 / LMG 10263 / NCTC 9343 / Onslow / VPI 2553 / EN-2) protein is 1-(5-phosphoribosyl)-5-[(5-phosphoribosylamino)methylideneamino] imidazole-4-carboxamide isomerase.